The primary structure comprises 380 residues: MLKPKDLCPRAGTRTFLEAMQAGKVHLARFVLDALDRSIIDCRAEQGRTPLMVAVGLPDPALRARFVRLLLEQGAAVNLRDERGRTALSLACERGHLDAVQLLVQFSGDPEAADSAGNSPVMWAAACGHGAVLEFLVRSFRRLGLRLDRTNRAGLTALQLAAARGHGTCVQALTGPWGRAAAAAAARGSNSDSPPGRPAPAASPEHRRPSPRRLPRPLLARFARAAGGHGGEAGSAGKNSGRHRAQGSERPELGRSMSLALGAVTEEEAARLRAGALMALPNSPQSSGTGRWRSQEVLEGAPPTLAQAPIGLSPHPEGGPGSGRLGLRRRSTAPDIPSLVGEAPGPESGPELEANALSVSVPGPNPWQAGTEAVVLRAQR.

5 ANK repeats span residues 11–40 (AGTRTFLEAMQAGKVHLARFVLDALDRSII), 46–79 (QGRTPLMVAVGLPDPALRARFVRLLLEQGAAVNL), 83–112 (RGRTALSLACERGHLDAVQLLVQFSGDPEA), 116–145 (AGNSPVMWAAACGHGAVLEFLVRSFRRLGL), and 153–182 (AGLTALQLAAARGHGTCVQALTGPWGRAAA). Composition is skewed to low complexity over residues 181–203 (AAAAAARGSNSDSPPGRPAPAAS) and 216–226 (RPLLARFARAA). The segment at 181–256 (AAAAAARGSN…GSERPELGRS (76 aa)) is disordered. Position 193 is a phosphoserine (serine 193). Residue serine 294 is modified to Phosphoserine. The interval 309–368 (PIGLSPHPEGGPGSGRLGLRRRSTAPDIPSLVGEAPGPESGPELEANALSVSVPGPNPWQ) is disordered.

The chain is Ankyrin repeat domain-containing protein 63 from Homo sapiens (Human).